An 883-amino-acid polypeptide reads, in one-letter code: Brevican core protein (883 aa).

An N-terminal signal peptide occupies residues 1-22 (MIPLLLSLLAALVLTQAPAALA). In terms of domain architecture, Ig-like V-type spans 35–154 (FRVRIGAAQL…SSDAVEVKVK (120 aa)). Cystine bridges form between Cys56–Cys136, Cys178–Cys249, Cys202–Cys223, Cys276–Cys351, and Cys300–Cys321. Asn129 is a glycosylation site (N-linked (GlcNAc...) asparagine). Link domains lie at 156 to 251 (VVFL…YCYA) and 256 to 353 (GELF…YCFR). Residue Asn336 is glycosylated (N-linked (GlcNAc...) asparagine). The tract at residues 389-574 (QEAVESESRG…EDGPSLLPET (186 aa)) is disordered. Ser413 bears the Phosphoserine mark. A glycan (O-linked (Xyl...) (chondroitin sulfate) serine) is linked at Ser413. A compositionally biased stretch (polar residues) spans 428–440 (ESETQSVAPPTGS). Over residues 441-451 (SEEEGEALEEE) the composition is skewed to acidic residues. Positions 452-467 (ERFKDTETPKEEKEQE) are enriched in basic and acidic residues. The GPI-anchor amidated serine moiety is linked to residue Ser622. An EGF-like domain is found at 622-658 (SSGDCIPSPCHNGGTCLEEKEGFRCLCVPGYGGDLCD). 7 disulfide bridges follow: Cys626–Cys637, Cys631–Cys646, Cys648–Cys657, Cys692–Cys784, Cys760–Cys776, Cys791–Cys834, and Cys820–Cys847. The 129-residue stretch at 658–786 (DVGLHFCSPG…NYHLSYTCKM (129 aa)) folds into the C-type lectin domain. A Sushi domain is found at 789-849 (VSCGPPPQLP…WEAPQISCVP (61 aa)). The segment at 859–883 (MTAPEGPRGQLPRQRKALLTPPSSL) is disordered.

This sequence belongs to the aggrecan/versican proteoglycan family. In terms of assembly, interacts with TNR. In terms of processing, O-glycosylated; contains chondroitin sulfate. In terms of tissue distribution, brain.

It is found in the secreted. The protein localises to the extracellular space. The protein resides in the extracellular matrix. It localises to the membrane. In terms of biological role, may play a role in the terminally differentiating and the adult nervous system during postnatal development. Could stabilize interactions between hyaluronan (HA) and brain proteoglycans. Isoform 2 may function as a chondroitin sulfate-bearing cell surface receptor. The polypeptide is Brevican core protein (Bcan) (Rattus norvegicus (Rat)).